Consider the following 678-residue polypeptide: RNA helicase NPH-II (678 aa).

One can recognise a Helicase ATP-binding domain in the interval Phe175–His351. Gly188–Thr195 contacts ATP. Residues Asp300–His303 carry the DEXH box motif. One can recognise a Helicase C-terminal domain in the interval Pro371–Leu546.

This sequence belongs to the DEAD box helicase family. DEAH subfamily. As to quaternary structure, monomer.

It localises to the virion. It carries out the reaction ATP + H2O = ADP + phosphate + H(+). NTP-dependent helicase that catalyzes unidirectional unwinding of 3'tailed duplex RNAs and plays an important role during transcription of early mRNAs, presumably by preventing R-loop formation behind the elongating RNA polymerase. Might also play a role in the export of newly synthesized mRNA chains out of the core into the cytoplasm. Required for replication and propagation of viral particles. In Oryctolagus cuniculus (Rabbit), this protein is RNA helicase NPH-II (OPG084).